A 261-amino-acid polypeptide reads, in one-letter code: Monopolin complex subunit pcs1 (261 aa).

The tract at residues Met1–His42 is disordered. Positions Lys10–Lys19 are enriched in basic and acidic residues. The segment covering Lys21–Thr34 has biased composition (basic residues). Positions His91 to Asn170 form a coiled coil.

As to quaternary structure, component of a monopolin-like complex composed of pcs1 and mde4. The complex associates with the kinetochore.

It is found in the nucleus. It localises to the nucleolus. The protein localises to the chromosome. Its subcellular location is the centromere. In terms of biological role, the monopolin-like pcs1/mde4 complex is essential for accurate chromosome segregation during mitosis and meiosis II. May clamp together microtubule binding sites on the same kinetochore, preventing merotelic attachment of microtubules. In contrast to its S.cerevisiae ortholog CSM1, is not required ofr mono-orientation during meiosis I. This Schizosaccharomyces pombe (strain 972 / ATCC 24843) (Fission yeast) protein is Monopolin complex subunit pcs1 (pcs1).